Consider the following 249-residue polypeptide: Enolase-phosphatase E1 (249 aa).

It belongs to the HAD-like hydrolase superfamily. MasA/MtnC family. As to quaternary structure, monomer. Mg(2+) is required as a cofactor.

The enzyme catalyses 5-methylsulfanyl-2,3-dioxopentyl phosphate + H2O = 1,2-dihydroxy-5-(methylsulfanyl)pent-1-en-3-one + phosphate. The protein operates within amino-acid biosynthesis; L-methionine biosynthesis via salvage pathway; L-methionine from S-methyl-5-thio-alpha-D-ribose 1-phosphate: step 3/6. It functions in the pathway amino-acid biosynthesis; L-methionine biosynthesis via salvage pathway; L-methionine from S-methyl-5-thio-alpha-D-ribose 1-phosphate: step 4/6. Its function is as follows. Bifunctional enzyme that catalyzes the enolization of 2,3-diketo-5-methylthiopentyl-1-phosphate (DK-MTP-1-P) into the intermediate 2-hydroxy-3-keto-5-methylthiopentenyl-1-phosphate (HK-MTPenyl-1-P), which is then dephosphorylated to form the acireductone 1,2-dihydroxy-3-keto-5-methylthiopentene (DHK-MTPene). The polypeptide is Enolase-phosphatase E1 (Synechococcus sp. (strain RCC307)).